Reading from the N-terminus, the 434-residue chain is Ribosomal protein uS12 methylthiotransferase RimO (434 aa).

Positions 2-112 constitute an MTTase N-terminal domain; the sequence is AKIGFVSLGC…VLEAVQVVLP (111 aa). [4Fe-4S] cluster is bound by residues Cys11, Cys47, Cys76, Cys142, Cys146, and Cys149. In terms of domain architecture, Radical SAM core spans 128-365; the sequence is LTPRHYAYVK…LELQARVSLR (238 aa). The region spanning 368 to 434 is the TRAM domain; the sequence is QRFVGKTLEV…DTYDLHGVQA (67 aa).

It belongs to the methylthiotransferase family. RimO subfamily. It depends on [4Fe-4S] cluster as a cofactor.

Its subcellular location is the cytoplasm. It carries out the reaction L-aspartate(89)-[ribosomal protein uS12]-hydrogen + (sulfur carrier)-SH + AH2 + 2 S-adenosyl-L-methionine = 3-methylsulfanyl-L-aspartate(89)-[ribosomal protein uS12]-hydrogen + (sulfur carrier)-H + 5'-deoxyadenosine + L-methionine + A + S-adenosyl-L-homocysteine + 2 H(+). Its function is as follows. Catalyzes the methylthiolation of an aspartic acid residue of ribosomal protein uS12. The polypeptide is Ribosomal protein uS12 methylthiotransferase RimO (Thermus thermophilus (strain ATCC 27634 / DSM 579 / HB8)).